Here is a 261-residue protein sequence, read N- to C-terminus: Chanoclavine-I dehydrogenase easD (261 aa).

A signal peptide spans 1–20 (MPSMTSKVFAITGGASGIGA). An NADP(+)-binding site is contributed by Ile-18. The N-linked (GlcNAc...) asparagine glycan is linked to Asn-43. Residues Asp-66, Arg-132, Tyr-166, Lys-170, and Thr-201 each contribute to the NADP(+) site. The Proton donor role is filled by Tyr-166. Lys-170 (lowers pKa of active site Tyr) is an active-site residue.

The protein belongs to the short-chain dehydrogenases/reductases (SDR) family. In terms of assembly, homotetramer.

The catalysed reaction is chanoclavine-I + NAD(+) = chanoclavine-I aldehyde + NADH + H(+). It functions in the pathway alkaloid biosynthesis; ergot alkaloid biosynthesis. Chanoclavine-I dehydrogenase; part of the gene cluster that mediates the biosynthesis of fungal ergot alkaloid. DmaW catalyzes the first step of ergot alkaloid biosynthesis by condensing dimethylallyl diphosphate (DMAP) and tryptophan to form 4-dimethylallyl-L-tryptophan. The second step is catalyzed by the methyltransferase easF that methylates 4-dimethylallyl-L-tryptophan in the presence of S-adenosyl-L-methionine, resulting in the formation of 4-dimethylallyl-L-abrine. The catalase easC and the FAD-dependent oxidoreductase easE then transform 4-dimethylallyl-L-abrine to chanoclavine-I which is further oxidized by easD in the presence of NAD(+), resulting in the formation of chanoclavine-I aldehyde. Agroclavine dehydrogenase easG then mediates the conversion of chanoclavine-I aldehyde to agroclavine via a non-enzymatic adduct reaction: the substrate is an iminium intermediate that is formed spontaneously from chanoclavine-I aldehyde in the presence of glutathione. The presence of easA is not required to complete this reaction. Further conversion of agroclavine to paspalic acid is a two-step process involving oxidation of agroclavine to elymoclavine and of elymoclavine to paspalic acid, the second step being performed by the elymoclavine oxidase cloA. Paspalic acid is then further converted to D-lysergic acid. Ergopeptines are assembled from D-lysergic acid and three different amino acids by the D-lysergyl-peptide-synthetases composed each of a monomudular and a trimodular nonribosomal peptide synthetase subunit. LpsB and lpsC encode the monomodular subunits responsible for D-lysergic acid activation and incorporation into the ergopeptine backbone. LpsA1 and A2 subunits encode the trimodular nonribosomal peptide synthetase assembling the tripeptide portion of ergopeptines. LpsA1 is responsible for formation of the major ergopeptine, ergotamine, and lpsA2 for alpha-ergocryptine, the minor ergopeptine of the total alkaloid mixture elaborated by C.purpurea. D-lysergyl-tripeptides are assembled by the nonribosomal peptide synthetases and released as N-(D-lysergyl-aminoacyl)-lactams. Cyclolization of the D-lysergyl-tripeptides is performed by the Fe(2+)/2-ketoglutarate-dependent dioxygenase easH which introduces a hydroxyl group into N-(D-lysergyl-aminoacyl)-lactam at alpha-C of the aminoacyl residue followed by spontaneous condensation with the terminal lactam carbonyl group. This chain is Chanoclavine-I dehydrogenase easD, found in Claviceps purpurea (Ergot fungus).